The sequence spans 506 residues: Histidine ammonia-lyase (506 aa).

Positions 144–146 (ASG) form a cross-link, 5-imidazolinone (Ala-Gly). Serine 145 carries the 2,3-didehydroalanine (Ser) modification.

The protein belongs to the PAL/histidase family. Contains an active site 4-methylidene-imidazol-5-one (MIO), which is formed autocatalytically by cyclization and dehydration of residues Ala-Ser-Gly.

Its subcellular location is the cytoplasm. It catalyses the reaction L-histidine = trans-urocanate + NH4(+). It participates in amino-acid degradation; L-histidine degradation into L-glutamate; N-formimidoyl-L-glutamate from L-histidine: step 1/3. This chain is Histidine ammonia-lyase, found in Legionella pneumophila (strain Lens).